An 830-amino-acid polypeptide reads, in one-letter code: V-type proton ATPase 116 kDa subunit a 3 (830 aa).

Topologically, residues 1–385 (MGSMFRSEEV…DAYGVGRYQE (385 aa)) are cytoplasmic. Residues 139-158 (QLAAAHTDGASERTPLLQAP) form a disordered region. The chain crosses the membrane as a helical span at residues 386–404 (VNPAPYTIITFPFLFAVMF). Residues 405–406 (GD) lie on the Vacuolar side of the membrane. A helical transmembrane segment spans residues 407–423 (VGHGLLMFLFALAMVLA). Over 424 to 438 (ENRPAVKAAQNEIWQ) the chain is Cytoplasmic. The helical transmembrane segment at 439-468 (TFFRGRYLLLLMGLFSIYTGFIYNECFSRA) threads the bilayer. Topologically, residues 469–532 (TSIFPSGWSV…AANHLSFLNS (64 aa)) are vacuolar. The helical transmembrane segment at 533–552 (FKMKMSVILGVVHMAFGVVL) threads the bilayer. Over 553–570 (GVFNHVHFGQRHRLLLET) the chain is Cytoplasmic. A helical transmembrane segment spans residues 571–591 (LPELTFLLGLFGYLVFLVIYK). Topologically, residues 592–635 (WLCVWAARAASAPSILIHFINMFLFSHSPSNRLLYPRQEVVQAT) are vacuolar. A helical membrane pass occupies residues 636 to 655 (LVVLALAMVPILLLGTPLHL). The Cytoplasmic portion of the chain corresponds to 656-720 (LHRHRRRLRR…EVLMHQAIHT (65 aa)). The disordered stretch occupies residues 681–701 (LPDASVNGWSSDEEKAGGLDD). A helical transmembrane segment spans residues 721-745 (IEFCLGCVSNTASYLRLWALSLAHA). The Vacuolar portion of the chain corresponds to 746-766 (QLSEVLWAMVMRIGLGLGREV). The chain crosses the membrane as a helical span at residues 767-807 (GVAAVVLVPIFAAFAVMTVAILLVMEGLSAFLHALRLHWVE). The Cytoplasmic portion of the chain corresponds to 808–830 (FQNKFYSGTGYKLSPFTFAATDD).

It belongs to the V-ATPase 116 kDa subunit family. V-ATPase is a heteromultimeric enzyme made up of two complexes: the ATP-hydrolytic V1 complex and the proton translocation V0 complex. The V1 complex consists of three catalytic AB heterodimers that form a heterohexamer, three peripheral stalks each consisting of EG heterodimers, one central rotor including subunits D and F, and the regulatory subunits C and H. The proton translocation complex V0 consists of the proton transport subunit a, a ring of proteolipid subunits c9c'', rotary subunit d, subunits e and f, and the accessory subunits ATP6AP1/Ac45 and ATP6AP2/PRR. As to expression, isoform long is highly expressed in osteoclastomas. Isoform short is highly expressed in thymus.

The protein localises to the membrane. Functionally, subunit of the V0 complex of vacuolar(H+)-ATPase (V-ATPase), a multisubunit enzyme composed of a peripheral complex (V1) that hydrolyzes ATP and a membrane integral complex (V0) that translocates protons. V-ATPase is responsible for acidifying and maintaining the pH of intracellular compartments and in some cell types, is targeted to the plasma membrane, where it is responsible for acidifying the extracellular environment. Seems to be directly involved in T-cell activation. This is V-type proton ATPase 116 kDa subunit a 3 (TCIRG1) from Homo sapiens (Human).